Here is a 252-residue protein sequence, read N- to C-terminus: Putative hydro-lyase OB3382 (252 aa).

The protein belongs to the D-glutamate cyclase family.

The protein is Putative hydro-lyase OB3382 of Oceanobacillus iheyensis (strain DSM 14371 / CIP 107618 / JCM 11309 / KCTC 3954 / HTE831).